Consider the following 122-residue polypeptide: Large ribosomal subunit protein uL14 (122 aa).

It belongs to the universal ribosomal protein uL14 family. In terms of assembly, part of the 50S ribosomal subunit. Forms a cluster with proteins L3 and L19. In the 70S ribosome, L14 and L19 interact and together make contacts with the 16S rRNA in bridges B5 and B8.

In terms of biological role, binds to 23S rRNA. Forms part of two intersubunit bridges in the 70S ribosome. In Acidothermus cellulolyticus (strain ATCC 43068 / DSM 8971 / 11B), this protein is Large ribosomal subunit protein uL14.